Consider the following 171-residue polypeptide: S-ribosylhomocysteine lyase (171 aa).

Fe cation-binding residues include His54, His58, and Cys128.

The protein belongs to the LuxS family. In terms of assembly, homodimer. Requires Fe cation as cofactor.

The catalysed reaction is S-(5-deoxy-D-ribos-5-yl)-L-homocysteine = (S)-4,5-dihydroxypentane-2,3-dione + L-homocysteine. Its function is as follows. Involved in the synthesis of autoinducer 2 (AI-2) which is secreted by bacteria and is used to communicate both the cell density and the metabolic potential of the environment. The regulation of gene expression in response to changes in cell density is called quorum sensing. Catalyzes the transformation of S-ribosylhomocysteine (RHC) to homocysteine (HC) and 4,5-dihydroxy-2,3-pentadione (DPD). The chain is S-ribosylhomocysteine lyase from Serratia proteamaculans (strain 568).